Consider the following 126-residue polypeptide: MNIALLKSKIHRASVTEARLDYVGSISIDEKLLQASGILEYEKVQVVNINNGARFETYTIATQEEGVVCLNGATARLAEVGDKVIIMSYADFNEEEAKTFKPKVVFVDENNTATKITNYEKHGSIF.

The Schiff-base intermediate with substrate; via pyruvic acid role is filled by Ser25. Ser25 carries the pyruvic acid (Ser) modification. Thr57 is a binding site for substrate. Tyr58 (proton donor) is an active-site residue. 72 to 74 contacts substrate; that stretch reads GAT.

This sequence belongs to the PanD family. As to quaternary structure, heterooctamer of four alpha and four beta subunits. Pyruvate is required as a cofactor. Is synthesized initially as an inactive proenzyme, which is activated by self-cleavage at a specific serine bond to produce a beta-subunit with a hydroxyl group at its C-terminus and an alpha-subunit with a pyruvoyl group at its N-terminus.

The protein localises to the cytoplasm. It catalyses the reaction L-aspartate + H(+) = beta-alanine + CO2. The protein operates within cofactor biosynthesis; (R)-pantothenate biosynthesis; beta-alanine from L-aspartate: step 1/1. Catalyzes the pyruvoyl-dependent decarboxylation of aspartate to produce beta-alanine. The polypeptide is Aspartate 1-decarboxylase (Campylobacter jejuni subsp. doylei (strain ATCC BAA-1458 / RM4099 / 269.97)).